The following is a 617-amino-acid chain: Solute carrier family 2, facilitated glucose transporter member 12 (617 aa).

The disordered stretch occupies residues 1-29 (MVPVENTEGPSLLNQKGTAVETEGSGSRH). The Cytoplasmic segment spans residues 1-44 (MVPVENTEGPSLLNQKGTAVETEGSGSRHPPWARGCGMFTFLSS). Residues 8–17 (EGPSLLNQKG) are compositionally biased toward polar residues. The chain crosses the membrane as a helical span at residues 45–65 (VTAAVSGLLVGYELGIISGAL). The Extracellular portion of the chain corresponds to 66–80 (LQIKTLLALSCHEQE). The helical transmembrane segment at 81-101 (MVVSSLVIGALLASLTGGVLI) threads the bilayer. Topologically, residues 102-115 (DRYGRRTAIILSSC) are cytoplasmic. A helical transmembrane segment spans residues 116–136 (LLGLGSLVLILSLSYTVLIVG). Arg-137 is a topological domain (extracellular). The chain crosses the membrane as a helical span at residues 138–158 (IAIGVSISLSSIATCVYIAEI). Over 159–172 (APQHRRGLLVSLNE) the chain is Cytoplasmic. The chain crosses the membrane as a helical span at residues 173 to 193 (LMIVIGILSAYISNYAFANVF). Residues 194 to 197 (HGWK) are Extracellular-facing. The chain crosses the membrane as a helical span at residues 198–218 (YMFGLVIPLGVLQAIAMYFLP). Residues 219 to 278 (PSPRFLVMKGQEGAASKVLGRLRALSDTTEELTVIKSSLKDEYQYSFWDLFRSKDNMRTR) are Cytoplasmic-facing. Residues 279 to 299 (IMIGLTLVFFVQITGQPNILF) traverse the membrane as a helical segment. Residues 300–317 (YASTVLKSVGFQSNEAAS) are Extracellular-facing. A helical transmembrane segment spans residues 318-338 (LASTGVGVVKVISTIPATLLV). The Cytoplasmic portion of the chain corresponds to 339 to 345 (DHVGSKT). The chain crosses the membrane as a helical span at residues 346–366 (FLCIGSSVMAASLVTMGIVNL). Topologically, residues 367–466 (NIHMNFTHIC…PAFLKWLSLA (100 aa)) are extracellular. N-linked (GlcNAc...) asparagine glycans are attached at residues Asn-371, Asn-383, Asn-396, and Asn-401. Residues 467 to 487 (SLLVYVAAFSIGLGPMPWLVL) traverse the membrane as a helical segment. Residues 488–498 (SEIFPGGIRGR) lie on the Cytoplasmic side of the membrane. A helical membrane pass occupies residues 499-519 (AMALTSSMNWGINLLISLTFL). Over 520–528 (TVTDLIGLP) the chain is Extracellular. The chain crosses the membrane as a helical span at residues 529–549 (WVCFIYTIMSLASLLFVVMFI). The Cytoplasmic portion of the chain corresponds to 550–617 (PETKGCSLEQ…GQSRQLSPET (68 aa)).

The protein belongs to the major facilitator superfamily. Sugar transporter (TC 2.A.1.1) family. Glucose transporter subfamily. Predominantly expressed in skeletal muscle, heart and prostate, with lower levels in brain, placenta and kidney.

It localises to the cell membrane. The protein localises to the endomembrane system. Its subcellular location is the cytoplasm. The protein resides in the perinuclear region. The catalysed reaction is D-glucose(out) = D-glucose(in). Functionally, insulin-independent facilitative glucose transporter. This Homo sapiens (Human) protein is Solute carrier family 2, facilitated glucose transporter member 12.